The primary structure comprises 375 residues: Probable RNA 3'-terminal phosphate cyclase-like protein (375 aa).

It belongs to the RNA 3'-terminal cyclase family. Type 2 subfamily.

It localises to the nucleus. It is found in the nucleolus. Its function is as follows. Does not have cyclase activity. Plays a role in 40S-ribosomal-subunit biogenesis in the early pre-rRNA processing steps at sites A0, A1 and A2 that are required for proper maturation of the 18S RNA. The protein is Probable RNA 3'-terminal phosphate cyclase-like protein of Arabidopsis thaliana (Mouse-ear cress).